The following is a 757-amino-acid chain: Elongation factor G, mitochondrial (757 aa).

Residues D66–E344 form the tr-type G domain. GTP-binding positions include A75–T82, D142–H146, and N196–D199.

It belongs to the TRAFAC class translation factor GTPase superfamily. Classic translation factor GTPase family. EF-G/EF-2 subfamily.

It localises to the mitochondrion. The protein operates within protein biosynthesis; polypeptide chain elongation. In terms of biological role, mitochondrial GTPase that catalyzes the GTP-dependent ribosomal translocation step during translation elongation. During this step, the ribosome changes from the pre-translocational (PRE) to the post-translocational (POST) state as the newly formed A-site-bound peptidyl-tRNA and P-site-bound deacylated tRNA move to the P and E sites, respectively. Catalyzes the coordinated movement of the two tRNA molecules, the mRNA and conformational changes in the ribosome. This is Elongation factor G, mitochondrial from Oryza sativa subsp. japonica (Rice).